Reading from the N-terminus, the 356-residue chain is Aminodeoxyfutalosine deaminase (356 aa).

Positions 18 and 20 each coordinate Zn(2+). Positions 73, 140, and 172 each coordinate substrate. Position 199 (histidine 199) interacts with Zn(2+). The Proton donor role is filled by glutamate 202. A Zn(2+)-binding site is contributed by aspartate 287.

Belongs to the metallo-dependent hydrolases superfamily. Adenosine and AMP deaminases family. It depends on Zn(2+) as a cofactor.

The catalysed reaction is 6-amino-6-deoxyfutalosine + H2O + H(+) = futalosine + NH4(+). Its pathway is quinol/quinone metabolism; menaquinone biosynthesis. In terms of biological role, catalyzes the deamination of aminodeoxyfutalosine (AFL) into futalosine (FL), a step in the biosynthesis of menaquinone (MK, vitamin K2). Is very poorly efficient on 1-(6-amino-9H-purin-9-yl)-1-deoxy-N-ethyl-beta-D-ribofuranuronamide (NECA), adenosine, 5'-methylthioadenosine, 5'-deoxyadenosine, 2'-deoxyadenosine, and AMP as substrate. This Acidothermus cellulolyticus (strain ATCC 43068 / DSM 8971 / 11B) protein is Aminodeoxyfutalosine deaminase.